A 747-amino-acid polypeptide reads, in one-letter code: Plakophilin-1 (747 aa).

A required for binding to single stranded DNA region spans residues methionine 1–lysine 234. Residues methionine 1–leucine 286 form a required for interaction with EIF4A1 region. Serine 4 carries the phosphoserine modification. The tract at residues threonine 48–glycine 68 is disordered. Phosphorylation in this region is required for cytoplasmic localization and protein stabilization stretches follow at residues serine 54 to serine 69 and arginine 116 to serine 191. Serine 118 bears the Phosphoserine; by PKB/AKT2 mark. Serine 119, serine 121, and serine 142 each carry phosphoserine. The tract at residues tyrosine 160 to isoleucine 269 is required for WNT-mediated nuclear localization. ARM repeat units follow at residues serine 243–phenylalanine 274, glutamine 275–phenylalanine 316, arginine 317–serine 359, threonine 360–glycine 415, methionine 416–alanine 463, asparagine 525–methionine 556, glycine 557–leucine 603, leucine 604–glycine 649, and asparagine 650–serine 713.

The protein belongs to the beta-catenin family. Part of a complex that contains DSG3, PKP1, YAP1 and YWHAG; the complex is required for localization of DSG3 and YAP1 to the cell membrane in keratinocytes. Interacts with DSP. Interacts (via N-terminus) with KRT5/CK5, KRT8/CK8 (via rod domain), KRT15/CK15 and KRT18/CK18 (via rod domain) as part of intermediate filaments. Interacts with VIM (via rod domain). Interacts with DSP. Interacts with DES. Interacts with FXR1; the interaction may facilitate the binding of PKP1 to PKP2, PKP3 and DSP mRNA. Interacts (via N-terminus) with EIF4A1; the interaction promotes EIF4A1 recruitment to the cap-dependent translation complex and EIF4A1 ATPase activity. Interacts with TJP1/ZO-1; the interaction facilitates TJP1/ZO-1 localization to the plasma membrane. Interacts (when phosphorylated) with YWHAG; the interaction results in translocation of PKP1 to the cytoplasm and loss of intercellular adhesion in keratinocytes. Post-translationally, phosphorylated by AKT2; required for interaction with YWHAG and subsequent localization away from desmosomes to the cytoplasm. Phosphorylation of Ser-118 by AKT2 promotes PKP1-driven cap-dependent mRNA translation and decreases intercellular adhesion, phosphorylation is promoted by insulin. Phosphorylation by RIPK4 at the N-terminus is required for its role in differentiation of keratinocytes and DSG1 localization at cell junctions. In terms of tissue distribution, expressed in stratified squamous, complex, glandular duct and bladder epithelia (at protein level). Widely expressed (at protein level).

Its subcellular location is the cell junction. It is found in the desmosome. The protein localises to the nucleus. It localises to the cytoplasm. The protein resides in the perinuclear region. Its subcellular location is the cell membrane. It is found in the stress granule. In terms of biological role, a component of desmosome cell-cell junctions which are required for positive regulation of cellular adhesion. Plays a role in desmosome protein expression regulation and localization to the desmosomal plaque, thereby maintaining cell sheet integrity and anchorage of desmosomes to intermediate filaments. Required for localization of DSG3 and YAP1 to the cell membrane in keratinocytes in response to mechanical strain, via the formation of an interaction complex composed of DSG3, YAP1, PKP1 and YWHAG. Positively regulates differentiation of keratinocytes, potentially via promoting localization of DSG1 at desmosome cell junctions. Required for calcium-independent development and maturation of desmosome plaques specifically at lateral cell-cell contacts in differentiating keratinocytes. Plays a role in the maintenance of DSG3 protein abundance, DSG3 clustering and localization of these clusters to the cell membrane in keratinocytes. May also promote keratinocyte proliferation and morphogenesis during postnatal development. Required for tight junction inside-out transepidermal barrier function of the skin. Promotes Wnt-mediated proliferation and differentiation of ameloblasts, via facilitating TJP1/ZO-1 localization to tight junctions. Binds single-stranded DNA (ssDNA), and may thereby play a role in sensing DNA damage and promoting cell survival. Positively regulates cap-dependent translation and as a result cell proliferation, via recruitment of EIF4A1 to the initiation complex and promotion of EIF4A1 ATPase activity. Regulates the mRNA stability and protein abundance of desmosome components PKP2, PKP3, DSC2 and DSP, potentially via its interaction with FXR1. This is Plakophilin-1 (PKP1) from Homo sapiens (Human).